A 222-amino-acid chain; its full sequence is Glutathione S-transferase A2 (222 aa).

A2 bears the N-acetylalanine mark. The GST N-terminal domain maps to 3–83; sequence GKPVLHYFNA…YIATKYDLYG (81 aa). The residue at position 4 (K4) is an N6-succinyllysine. Residues Y9, K45, 54-55, and 67-68 each bind glutathione; these read QV and QT. The GST C-terminal domain occupies 85-208; the sequence is DMKERALIDM…HPGSQRKPPL (124 aa).

The protein belongs to the GST superfamily. Alpha family. As to quaternary structure, homodimer. Heterodimer of GSTA1 and GSTA2. In terms of tissue distribution, expressed in the kidney.

It catalyses the reaction RX + glutathione = an S-substituted glutathione + a halide anion + H(+). Its function is as follows. Catalyzes the conjugation of glutathione to a large variety of electrophilic compounds. In Mus musculus (Mouse), this protein is Glutathione S-transferase A2 (Gsta2).